The chain runs to 479 residues: Cardiolipin synthase A (479 aa).

Helical transmembrane passes span 8-28 (FFGY…LHAV) and 38-58 (IAWA…YLVF). 2 consecutive PLD phosphodiesterase domains span residues 218–245 (VNFR…GDEY) and 392–419 (QPGF…DNRS). Residues H223, K225, D230, H397, K399, and D404 contribute to the active site.

It belongs to the phospholipase D family. Cardiolipin synthase subfamily. ClsA sub-subfamily.

The protein resides in the cell inner membrane. The enzyme catalyses 2 a 1,2-diacyl-sn-glycero-3-phospho-(1'-sn-glycerol) = a cardiolipin + glycerol. Its function is as follows. Catalyzes the reversible phosphatidyl group transfer from one phosphatidylglycerol molecule to another to form cardiolipin (CL) (diphosphatidylglycerol) and glycerol. This is Cardiolipin synthase A from Pseudomonas putida (strain GB-1).